A 190-amino-acid polypeptide reads, in one-letter code: Adenine phosphoribosyltransferase (190 aa).

It belongs to the purine/pyrimidine phosphoribosyltransferase family. Homodimer.

Its subcellular location is the cytoplasm. It catalyses the reaction AMP + diphosphate = 5-phospho-alpha-D-ribose 1-diphosphate + adenine. It functions in the pathway purine metabolism; AMP biosynthesis via salvage pathway; AMP from adenine: step 1/1. In terms of biological role, catalyzes a salvage reaction resulting in the formation of AMP, that is energically less costly than de novo synthesis. The polypeptide is Adenine phosphoribosyltransferase (Cupriavidus taiwanensis (strain DSM 17343 / BCRC 17206 / CCUG 44338 / CIP 107171 / LMG 19424 / R1) (Ralstonia taiwanensis (strain LMG 19424))).